A 150-amino-acid chain; its full sequence is Snake venom vascular endothelial growth factor toxin barietin (150 aa).

Residues 1–24 form the signal peptide; that stretch reads MAAYLLAVAILFCIQGWPSGTVQG. Glutamate 25 carries the pyrrolidone carboxylic acid (Glu) modification. 3 disulfides stabilise this stretch: cysteine 38/cysteine 80, cysteine 69/cysteine 115, and cysteine 73/cysteine 117. Residues 119–150 are disordered; sequence PRSGSRVNIGKHKRSPEEGEREPSSPLTPGSL. Residues 122–150 constitute a propeptide that is removed on maturation; sequence GSRVNIGKHKRSPEEGEREPSSPLTPGSL.

It belongs to the PDGF/VEGF growth factor family. Snake venom VEGF subfamily. In terms of assembly, homodimer; disulfide-linked. Interacts with high affinity with VEGF receptor-2 (KDR), and with a lower affinity with VEGF receptor-1 (FLT1). Does not bind VEGF receptor-3 (FLT4) and neuropilin-1 (NRP1). As to expression, expressed by the venom gland.

It is found in the secreted. Its function is as follows. Snake venom VEGFs that may contribute to venom dispersion and prey subjugation by inducing vascular permeability and hypotension. This protein induces an increase in capillary permeability after intradermal injection, as well as a drastic hypotensive effect after intravenous injection. The hypotension is mediated by nitric oxide (NO), which is produced by VEGF-activated endothelium NO synthase. Also induces angiogenesis in vitro, probably through VEGF receptor (KDR/VEGFR-2) signaling. In Bitis arietans (African puff adder), this protein is Snake venom vascular endothelial growth factor toxin barietin.